The following is a 255-amino-acid chain: Cathepsin G (255 aa).

Positions 1–18 (MQPLLLLLAFLLPTGAEA) are cleaved as a signal peptide. A propeptide spans 19 to 20 (GE) (activation peptide). The segment at 21 to 25 (IIGGR) is important for antimicrobial activity. In terms of domain architecture, Peptidase S1 spans 21 to 243 (IIGGRESRPH…FLPWIRTTMR (223 aa)). Cys49 and Cys65 are disulfide-bonded. His64 acts as the Charge relay system in catalysis. Residue Asn71 is glycosylated (N-linked (GlcNAc...) (complex) asparagine; alternate). N-linked (GlcNAc...) (paucimannose) asparagine; alternate glycosylation is present at Asn71. The tract at residues 97–111 (HPQYNQRTIQNDIML) is important for antimicrobial activity. Asp108 serves as the catalytic Charge relay system. Disulfide bonds link Cys142–Cys207 and Cys172–Cys186. Ser201 acts as the Charge relay system in catalysis. Positions 245–255 (FKLLDQMETPL) are excised as a propeptide.

Belongs to the peptidase S1 family. In terms of assembly, (Microbial infection) Interacts with CASP4; the interaction is promoted by the Td92 surface protein of the periodontal pathogen T.denticola and leads to CASP4 activation. (Microbial infection) Interacts with M.tuberculosis protein Rv3364c. As to quaternary structure, (Microbial infection) Interacts with S.aureus EapH1; EapH1 acts as a reversible inhibitor of CATG activity. In terms of processing, two C-terminal truncation variants have been identified, one which ends at Arg-243 and one which ends at Ser-244. Expressed in neutrophils (at protein level). Expressed in B cells.

It is found in the cell membrane. It localises to the cytoplasmic granule. The protein resides in the secreted. The protein localises to the cytoplasm. Its subcellular location is the cytosol. It is found in the lysosome. It localises to the nucleus. It carries out the reaction Specificity similar to chymotrypsin C.. With respect to regulation, inhibited by soybean trypsin inhibitor, benzamidine, the synthetic peptide R13K, Z-Gly-Leu-Phe-CH2Cl, phenylmethylsulfonyl fluoride, 3,4-dichloroisocoumarin, DFP, SBTI and alpha-1-antitrypsin. Inhibited by LPS from P.aeruginosa but not by LPS from S.minnesota. Not inhibited by elastinal, CMK, TLCK, ETDA or leupeptin. (Microbial infection) Inhibited reversibly by S.aureus EapH1. Its activity is regulated as follows. (Microbial infection) Activity is induced by the Td92 surface protein of the periodontal pathogen T.denticola. Functionally, serine protease with trypsin- and chymotrypsin-like specificity. Also displays antibacterial activity against Gram-negative and Gram-positive bacteria independent of its protease activity. Prefers Phe and Tyr residues in the P1 position of substrates but also cleaves efficiently after Trp and Leu. Shows a preference for negatively charged amino acids in the P2' position and for aliphatic amino acids both upstream and downstream of the cleavage site. Required for recruitment and activation of platelets which is mediated by the F2RL3/PAR4 platelet receptor. Binds reversibly to and stimulates B cells and CD4(+) and CD8(+) T cells. Also binds reversibly to natural killer (NK) cells and enhances NK cell cytotoxicity through its protease activity. Cleaves complement C3. Cleaves vimentin. Cleaves thrombin receptor F2R/PAR1 and acts as either an agonist or an inhibitor, depending on the F2R cleavage site. Cleavage of F2R at '41-Arg-|-Ser-42' results in receptor activation while cleavage at '55-Phe-|-Trp-56' results in inhibition of receptor activation. Cleaves the synovial mucin-type protein PRG4/lubricin. Cleaves and activates IL36G which promotes expression of chemokines CXCL1 and CXLC8 in keratinocytes. Cleaves IL33 into mature forms which have greater activity than the unprocessed form. Cleaves coagulation factor F8 to produce a partially activated form. Also cleaves and activates coagulation factor F10. Cleaves leukocyte cell surface protein SPN/CD43 to release its extracellular domain and trigger its intramembrane proteolysis by gamma-secretase, releasing the CD43 cytoplasmic tail chain (CD43-ct) which translocates to the nucleus. Cleaves CCL5/RANTES to produce RANTES(4-68) lacking the N-terminal three amino acids which exhibits reduced chemotactic and antiviral activities. During apoptosis, cleaves SMARCA2/BRM to produce a 160 kDa cleavage product which localizes to the cytosol. Cleaves myelin basic protein MBP in B cell lysosomes at '224-Phe-|-Lys-225' and '248-Phe-|-Ser-249', degrading the major immunogenic MBP epitope and preventing the activation of MBP-specific autoreactive T cells. Cleaves annexin ANXA1 and antimicrobial peptide CAMP to produce peptides which act on neutrophil N-formyl peptide receptors to enhance the release of CXCL2. Acts as a ligand for the N-formyl peptide receptor FPR1, enhancing phagocyte chemotaxis. Has antibacterial activity against the Gram-negative bacteria N.gonorrhoeae and P.aeruginosa. Likely to act against N.gonorrhoeae by interacting with N.gonorrhoeae penA/PBP2. Exhibits potent antimicrobial activity against the Gram-positive bacterium L.monocytogenes. Has antibacterial activity against the Gram-positive bacterium S.aureus and degrades S.aureus biofilms, allowing polymorphonuclear leukocytes to penetrate the biofilm and phagocytose bacteria. Has antibacterial activity against M.tuberculosis. Mediates CASP4 activation induced by the Td92 surface protein of the periodontal pathogen T.denticola, causing production and secretion of IL1A and leading to pyroptosis of gingival fibroblasts. Induces platelet aggregation which is strongly potentiated in the presence of ELANE. The protein is Cathepsin G (CTSG) of Homo sapiens (Human).